The sequence spans 165 residues: Lymphocyte antigen 6K (165 aa).

A signal peptide spans 1 to 17; sequence MALLALLLVVALPRVWT. A glycan (N-linked (GlcNAc...) asparagine) is linked at asparagine 20. One can recognise a UPAR/Ly6 domain in the interval 47-141; sequence ERENTFECQN…VFKEYAGSMG (95 aa). Glycine 138 is lipidated: GPI-anchor amidated glycine. A propeptide spans 139-165 (removed in mature form); sequence SMGESCGGLWLAILLLLASIAAGLSLS.

As to quaternary structure, interacts with TEX101. As to expression, specifically expressed in testis (at protein level).

It is found in the secreted. Its subcellular location is the cytoplasm. The protein localises to the cell membrane. It localises to the cytoplasmic vesicle. The protein resides in the secretory vesicle. It is found in the acrosome. Its subcellular location is the membrane raft. Required for sperm migration into the oviduct and male fertility by controlling binding of sperm to zona pellucida. May play a role in cell growth. The protein is Lymphocyte antigen 6K of Homo sapiens (Human).